A 99-amino-acid polypeptide reads, in one-letter code: MAAVLREGDELIMHLMIQPKASRDQIVGLHGEELKVAITAPPVDGQANSHLIKYLAKQFKVAKGQVRIVRGELGRHKTVAIEAPRQIPAEVSALLDNQG.

The protein belongs to the UPF0235 family.

The chain is UPF0235 protein AHA_3661 from Aeromonas hydrophila subsp. hydrophila (strain ATCC 7966 / DSM 30187 / BCRC 13018 / CCUG 14551 / JCM 1027 / KCTC 2358 / NCIMB 9240 / NCTC 8049).